We begin with the raw amino-acid sequence, 408 residues long: LL-diaminopimelate aminotransferase (408 aa).

Residues Tyr-15 and Gly-42 each contribute to the substrate site. Pyridoxal 5'-phosphate-binding positions include Tyr-72, Ser-108–Lys-109, Tyr-132, Asn-187, Tyr-218, and Ser-246–Ser-248. Substrate is bound by residues Lys-109, Tyr-132, and Asn-187. N6-(pyridoxal phosphate)lysine is present on Lys-249. Residues Arg-257 and Asn-292 each contribute to the pyridoxal 5'-phosphate site. Substrate contacts are provided by Asn-292 and Arg-388.

It belongs to the class-I pyridoxal-phosphate-dependent aminotransferase family. LL-diaminopimelate aminotransferase subfamily. In terms of assembly, homodimer. It depends on pyridoxal 5'-phosphate as a cofactor.

It carries out the reaction (2S,6S)-2,6-diaminopimelate + 2-oxoglutarate = (S)-2,3,4,5-tetrahydrodipicolinate + L-glutamate + H2O + H(+). Its pathway is amino-acid biosynthesis; L-lysine biosynthesis via DAP pathway; LL-2,6-diaminopimelate from (S)-tetrahydrodipicolinate (aminotransferase route): step 1/1. In terms of biological role, involved in the synthesis of meso-diaminopimelate (m-DAP or DL-DAP), required for both lysine and peptidoglycan biosynthesis. Catalyzes the direct conversion of tetrahydrodipicolinate to LL-diaminopimelate. The protein is LL-diaminopimelate aminotransferase of Prochlorococcus marinus (strain MIT 9515).